Reading from the N-terminus, the 98-residue chain is Small ribosomal subunit protein bS6 (98 aa).

Belongs to the bacterial ribosomal protein bS6 family.

Its function is as follows. Binds together with bS18 to 16S ribosomal RNA. This is Small ribosomal subunit protein bS6 from Staphylococcus carnosus (strain TM300).